A 154-amino-acid polypeptide reads, in one-letter code: Large ribosomal subunit protein uL22c (154 aa).

The protein belongs to the universal ribosomal protein uL22 family. In terms of assembly, part of the 50S ribosomal subunit.

The protein resides in the plastid. Its subcellular location is the chloroplast. Its function is as follows. This protein binds specifically to 23S rRNA. In terms of biological role, the globular domain of the protein is located near the polypeptide exit tunnel on the outside of the subunit, while an extended beta-hairpin is found that lines the wall of the exit tunnel in the center of the 70S ribosome. The protein is Large ribosomal subunit protein uL22c (rpl22) of Guizotia abyssinica (Niger).